The following is a 223-amino-acid chain: Deoxyribose-phosphate aldolase (223 aa).

The active-site Proton donor/acceptor is the Asp91. Lys153 serves as the catalytic Schiff-base intermediate with acetaldehyde. Catalysis depends on Lys182, which acts as the Proton donor/acceptor.

This sequence belongs to the DeoC/FbaB aldolase family. DeoC type 1 subfamily.

The protein resides in the cytoplasm. The enzyme catalyses 2-deoxy-D-ribose 5-phosphate = D-glyceraldehyde 3-phosphate + acetaldehyde. It functions in the pathway carbohydrate degradation; 2-deoxy-D-ribose 1-phosphate degradation; D-glyceraldehyde 3-phosphate and acetaldehyde from 2-deoxy-alpha-D-ribose 1-phosphate: step 2/2. Its function is as follows. Catalyzes a reversible aldol reaction between acetaldehyde and D-glyceraldehyde 3-phosphate to generate 2-deoxy-D-ribose 5-phosphate. This Streptococcus pyogenes serotype M12 (strain MGAS2096) protein is Deoxyribose-phosphate aldolase.